The sequence spans 253 residues: Tetraspanin-3 (253 aa).

At 1 to 11 (MGQCGITSSKT) the chain is on the cytoplasmic side. A helical transmembrane segment spans residues 12–32 (VLVFLNLIFWGAAGILCYVGA). Over 33–50 (YVFITYDDYDHFFEDVYT) the chain is Extracellular. The chain crosses the membrane as a helical span at residues 51–71 (LIPAVVIIAVGALLFIIGLIG). Topologically, residues 72–85 (CCATIRESRCGLAT) are cytoplasmic. The chain crosses the membrane as a helical span at residues 86-106 (FVIILLLVFVTEVVVVVLGYV). The Extracellular portion of the chain corresponds to 107-212 (YRAKVENEVD…KKLQEIMMHV (106 aa)). N-linked (GlcNAc...) asparagine glycosylation is found at Asn-127, Asn-152, Asn-167, and Asn-183. The helical transmembrane segment at 213–233 (IWAALAFAAIQLLGMLCACIV) threads the bilayer. At 234 to 253 (LCRRSRDPAYELLITGGAYA) the chain is on the cytoplasmic side.

The protein belongs to the tetraspanin (TM4SF) family. As to quaternary structure, interacts with claudin-11/CLDN11 and integrins.

It localises to the membrane. Its function is as follows. Regulates the proliferation and migration of oligodendrocytes, a process essential for normal myelination and repair. The chain is Tetraspanin-3 (TSPAN3) from Bos taurus (Bovine).